The primary structure comprises 1358 residues: Probable aldehyde oxidase 1 (1358 aa).

The 88-residue stretch at 4 to 91 folds into the 2Fe-2S ferredoxin-type domain; it reads AAAVVAVNGE…HCAVTTSEGI (88 aa). [2Fe-2S] cluster contacts are provided by Cys43, Cys48, Cys51, and Cys73. The FAD-binding PCMH-type domain maps to 236–418; that stretch reads AVTGDGCWFH…ISISIPDWCS (183 aa). The disordered stretch occupies residues 540–567; the sequence is KPENANNVPNGSCTTNGTTNGSAESTVD. The segment covering 549-561 has biased composition (low complexity); that stretch reads NGSCTTNGTTNGS.

This sequence belongs to the xanthine dehydrogenase family. Aldehyde oxidases (AO) are homodimers and heterodimers of AO subunits. [2Fe-2S] cluster is required as a cofactor. FAD serves as cofactor. The cofactor is Mo-molybdopterin.

The enzyme catalyses an aldehyde + O2 + H2O = a carboxylate + H2O2 + H(+). This Oryza sativa subsp. japonica (Rice) protein is Probable aldehyde oxidase 1.